Consider the following 137-residue polypeptide: Large ribosomal subunit protein uL16 (137 aa).

Over residues 1 to 16 (MLQPKRTKFRKVHTGR) the composition is skewed to basic residues. A disordered region spans residues 1–22 (MLQPKRTKFRKVHTGRNRGLAQ).

It belongs to the universal ribosomal protein uL16 family. Part of the 50S ribosomal subunit.

In terms of biological role, binds 23S rRNA and is also seen to make contacts with the A and possibly P site tRNAs. The polypeptide is Large ribosomal subunit protein uL16 (Idiomarina loihiensis (strain ATCC BAA-735 / DSM 15497 / L2-TR)).